The primary structure comprises 1005 residues: Isoleucine--tRNA ligase (1005 aa).

The short motif at 70 to 80 (PYANGNIHIGH) is the 'HIGH' region element. Residue Glu-629 coordinates L-isoleucyl-5'-AMP. Residues 670 to 674 (KMSKS) carry the 'KMSKS' region motif. Lys-673 provides a ligand contact to ATP.

The protein belongs to the class-I aminoacyl-tRNA synthetase family. IleS type 1 subfamily. In terms of assembly, monomer.

It is found in the cytoplasm. It catalyses the reaction tRNA(Ile) + L-isoleucine + ATP = L-isoleucyl-tRNA(Ile) + AMP + diphosphate. Its function is as follows. Catalyzes the attachment of isoleucine to tRNA(Ile). As IleRS can inadvertently accommodate and process structurally similar amino acids such as valine, to avoid such errors it has two additional distinct tRNA(Ile)-dependent editing activities. One activity is designated as 'pretransfer' editing and involves the hydrolysis of activated Val-AMP. The other activity is designated 'posttransfer' editing and involves deacylation of mischarged Val-tRNA(Ile). This Rhodopseudomonas palustris (strain ATCC BAA-98 / CGA009) protein is Isoleucine--tRNA ligase.